The following is a 988-amino-acid chain: Centrosomal protein of 120 kDa (988 aa).

One can recognise a C2 1 domain in the interval 1-112; that stretch reads MVPKSDQLLI…QETKQAPKWY (112 aa). The tract at residues 354–425 is disordered; it reads QNGHEAEHSQ…KPTVKGIGSV (72 aa). Pro residues predominate over residues 384-394; it reads SPAPPPPPNQT. Residues 435–569 enclose the C2 2 domain; the sequence is TCGASEVVTS…LSSEKTRFLG (135 aa). The interval 624–644 is disordered; the sequence is GVPAVDQKPSSPPPAPCPSEI. Residues 706 to 929 are a coiled coil; the sequence is AEYSILEGKL…QYQDCKEIAS (224 aa). Residues Ser-934 and Ser-938 each carry the phosphoserine modification.

The protein belongs to the CEP120 family. Interacts with TACC2, TACC3, CCDC52, TALPID3. Ubiquitous. Highly expressed in brain, lung and kidney and weakly expressed in heart, liver, small intestine and limb (at protein level). Expressed in brain.

It localises to the cytoplasm. Its subcellular location is the cytoskeleton. It is found in the microtubule organizing center. The protein resides in the centrosome. Its function is as follows. Plays a role in the microtubule-dependent coupling of the nucleus and the centrosome. Involved in the processes that regulate centrosome-mediated interkinetic nuclear migration (INM) of neural progenitors and for proper positioning of neurons during brain development. Also implicated in the migration and selfrenewal of neural progenitors. Required for centriole duplication and maturation during mitosis and subsequent ciliogenesis. Required for the recruitment of CEP295 to the proximal end of new-born centrioles at the centriolar microtubule wall during early S phase in a PLK4-dependent manner. This chain is Centrosomal protein of 120 kDa (Cep120), found in Mus musculus (Mouse).